The following is a 313-amino-acid chain: Ribosomal RNA small subunit methyltransferase H (313 aa).

S-adenosyl-L-methionine is bound by residues 36–38 (GGH), D56, F80, D102, and Q109.

The protein belongs to the methyltransferase superfamily. RsmH family.

It is found in the cytoplasm. The catalysed reaction is cytidine(1402) in 16S rRNA + S-adenosyl-L-methionine = N(4)-methylcytidine(1402) in 16S rRNA + S-adenosyl-L-homocysteine + H(+). Specifically methylates the N4 position of cytidine in position 1402 (C1402) of 16S rRNA. The protein is Ribosomal RNA small subunit methyltransferase H of Actinobacillus pleuropneumoniae serotype 3 (strain JL03).